The primary structure comprises 222 residues: Small ribosomal subunit protein uS7m (222 aa).

The N-terminal 14 residues, 1-14 (MTTKLARFAQKRWI), are a transit peptide targeting the mitochondrion.

The protein belongs to the universal ribosomal protein uS7 family. In terms of assembly, component of the mitochondrial ribosome small subunit (28S) which comprises a 12S rRNA and about 30 distinct proteins.

The protein resides in the mitochondrion. This chain is Small ribosomal subunit protein uS7m (mrps-7), found in Caenorhabditis elegans.